We begin with the raw amino-acid sequence, 222 residues long: NAD(P)H-hydrate epimerase (222 aa).

The 201-residue stretch at 9–209 (MQQIDSYTIE…DIGLRLPEDF (201 aa)) folds into the YjeF N-terminal domain. (6S)-NADPHX is bound at residue 57–61 (NNGAD). Residues N58 and D119 each coordinate K(+). (6S)-NADPHX-binding positions include 123-129 (GVGLNNT) and D152. T155 lines the K(+) pocket.

It belongs to the NnrE/AIBP family. Requires K(+) as cofactor.

The enzyme catalyses (6R)-NADHX = (6S)-NADHX. It catalyses the reaction (6R)-NADPHX = (6S)-NADPHX. Its function is as follows. Catalyzes the epimerization of the S- and R-forms of NAD(P)HX, a damaged form of NAD(P)H that is a result of enzymatic or heat-dependent hydration. This is a prerequisite for the S-specific NAD(P)H-hydrate dehydratase to allow the repair of both epimers of NAD(P)HX. In Leuconostoc citreum (strain KM20), this protein is NAD(P)H-hydrate epimerase.